Reading from the N-terminus, the 166-residue chain is Glycine cleavage system H protein 3, mitochondrial (166 aa).

The N-terminal 35 residues, 1–35 (MALRMWASSTANALKLSSSASKSHLLPAFSISRCF), are a transit peptide targeting the mitochondrion. In terms of domain architecture, Lipoyl-binding spans 57–139 (VATIGITDHA…YEDGWMIKVK (83 aa)). Lys-98 bears the N6-lipoyllysine mark. Ser-141 is modified (phosphoserine).

This sequence belongs to the GcvH family. The glycine cleavage system is composed of four proteins: P, T, L and H. The cofactor is (R)-lipoate. Post-translationally, S-nitrosylated and/or glutathionylated at unknown positions in response to nitric oxide.

The protein localises to the mitochondrion. Its activity is regulated as follows. Inhibited by harpin, S-nitrosoglutathione (GSNO), nitric oxide, N-ethylmaleimide and 5,5'-dithiobis-(2-nitrobenzoic acid). Its function is as follows. The glycine decarboxylase (GDC) or glycine cleavage system catalyzes the degradation of glycine. The H protein shuttles the methylamine group of glycine from the P protein to the T protein. The sequence is that of Glycine cleavage system H protein 3, mitochondrial (GDH3) from Arabidopsis thaliana (Mouse-ear cress).